Reading from the N-terminus, the 1548-residue chain is Dual oxidase 2 (1548 aa).

The signal sequence occupies residues 1 to 25 (MLRARPEALMLLGALLTGSLGPSGN). At 26–601 (QDALSLPWEV…EGSSPGFAIT (576 aa)) the chain is on the extracellular side. Residues 30 to 596 (SLPWEVQRYD…VLDFFEGSSP (567 aa)) are peroxidase-like; mediates peroxidase activity. N-linked (GlcNAc...) asparagine glycans are attached at residues Asn-100, Asn-348, Asn-382, Asn-455, and Asn-537. Cys-124 and Cys-1162 are joined by a disulfide. Residues 602–622 (IIALCCLPLVSLLLSGVVAYF) traverse the membrane as a helical segment. At 623–1041 (RGREHKKLQK…KRFVENYRRH (419 aa)) the chain is on the cytoplasmic side. 3 EF-hand domains span residues 819–854 (PQDM…FMKG), 855–890 (SPED…FIEI), and 899–934 (QLAE…HDSE). 9 residues coordinate Ca(2+): Asp-832, Asp-834, Asn-836, Tyr-838, Glu-843, Asp-868, Asp-870, Asn-872, and Glu-879. Residues 960–1245 (ISCRVSFITR…GSYALIQLPT (286 aa)) are interaction with TXNDC11. The segment at 971 to 991 (PGERSHPQGLGPPAPEAPELG) is disordered. A helical transmembrane segment spans residues 1042–1062 (IVCVAIFSAICVGVFADRAYY). Topologically, residues 1063–1076 (YGFASPPSDIAQTT) are extracellular. A helical membrane pass occupies residues 1077-1097 (LVGIILSRGTAASVSFMFSYI). The Ferric oxidoreductase domain occupies 1084–1266 (RGTAASVSFM…YGGDKLVSLS (183 aa)). Residues 1098 to 1128 (LLTMCRNLITFLRETFLNRYVPFDAAVDFHR) lie on the Cytoplasmic side of the membrane. The helical transmembrane segment at 1129-1151 (WIAMAAVVLAILHSAGHAVNVYI) threads the bilayer. Topologically, residues 1152–1185 (FSVSPLSLLACIFPNVFVNDGSKLPQKFYWWFFQ) are extracellular. Residues 1186–1206 (TVPGMTGVLLLLVLAIMYVFA) form a helical membrane-spanning segment. The Cytoplasmic portion of the chain corresponds to 1207-1223 (SHHFRRRSFRGFWLTHH). A run of 2 helical transmembrane segments spans residues 1224 to 1244 (LYIL…IQLP) and 1245 to 1265 (TFHI…LVSL). The Cytoplasmic segment spans residues 1266–1548 (SRKKVEISVV…AHFMHHYENF (283 aa)). An FAD-binding FR-type domain is found at 1267 to 1373 (RKKVEISVVK…DGPFGEGHQE (107 aa)).

The protein in the N-terminal section; belongs to the peroxidase family. Heterodimer with DUOXA2; disulfide-linked. Interacts with TXNDC11, TPO and CYBA. Post-translationally, N-glycosylated. In terms of tissue distribution, expressed in colon, small intestine, duodenum and tracheal surface epithelial cells (at protein level). Expressed in thyrocytes. Also detected in kidney, liver, lung, pancreas, prostate, salivary glands, rectum and testis.

The protein localises to the apical cell membrane. It is found in the cell junction. The catalysed reaction is NADH + O2 + H(+) = H2O2 + NAD(+). The enzyme catalyses NADPH + O2 + H(+) = H2O2 + NADP(+). The protein operates within hormone biosynthesis; thyroid hormone biosynthesis. With respect to regulation, peroxidase activity is inhibited by aminobenzohydrazide. The NADPH oxidase activity is calcium-dependent. Its function is as follows. Generates hydrogen peroxide which is required for the activity of thyroid peroxidase/TPO and lactoperoxidase/LPO. Plays a role in thyroid hormones synthesis and lactoperoxidase-mediated antimicrobial defense at the surface of mucosa. May have its own peroxidase activity through its N-terminal peroxidase-like domain. The protein is Dual oxidase 2 (DUOX2) of Homo sapiens (Human).